The following is a 372-amino-acid chain: Transcription factor YY2 (372 aa).

Residues 32 to 102 form a mediates transcriptional activation region; it reads MEDIPTESVQ…SDNQLGNDLE (71 aa). Over residues 126 to 136 the composition is skewed to low complexity; the sequence is SAASTSTSTQS. Disordered stretches follow at residues 126–172 and 186–210; these read SAAS…WEQK and TMWS…PPDY. Residues 137–146 are compositionally biased toward basic residues; that stretch reads RSKKPSKKPS. Composition is skewed to polar residues over residues 154-165 and 186-196; these read EANPAGSSSSLG and TMWSPNDNNDQ. The segment at 237-372 is mediates transcriptional repression; that stretch reads EFTKVKPKRS…LTHVKTKNNP (136 aa). 4 C2H2-type zinc fingers span residues 254-278, 283-305, 311-335, and 341-365; these read VPCS…LHIH, HVCA…QLVH, FQCT…LRIH, and FVCP…ILTH.

This sequence belongs to the YY transcription factor family. In terms of tissue distribution, expressed in kidney, liver, spleen and testis but not in colon.

Its subcellular location is the nucleus. In terms of biological role, functions as a multifunctional transcription factor that may exhibit positive and negative control on a large number of genes. May antagonize YY1 and function in development and differentiation. The sequence is that of Transcription factor YY2 (YY2) from Homo sapiens (Human).